The chain runs to 339 residues: UDP-galactose transporter homolog 1 (339 aa).

9 helical membrane-spanning segments follow: residues Ile5–Leu25, Val43–Ile63, Ala91–Leu111, Leu138–Ser158, Ser171–Ala191, His208–Val228, Ile246–Leu268, Ser273–Tyr295, and Leu301–Lys321.

This sequence belongs to the nucleotide-sugar transporter family. SLC35B subfamily.

Its subcellular location is the endoplasmic reticulum membrane. Its function is as follows. May be involved in specific transport of UDP-Gal from the cytosol to the Golgi lumen. Involved in the maintenance of optimal conditions for the folding of secretory pathway proteins in the endoplasmic reticulum. The chain is UDP-galactose transporter homolog 1 (HUT1) from Kluyveromyces lactis (strain ATCC 8585 / CBS 2359 / DSM 70799 / NBRC 1267 / NRRL Y-1140 / WM37) (Yeast).